A 50-amino-acid polypeptide reads, in one-letter code: Large ribosomal subunit protein eL39 (50 aa).

Basic residues predominate over residues 1–12 (MGKKSKAKKKRL). The disordered stretch occupies residues 1–21 (MGKKSKAKKKRLGKLEKQNSR).

Belongs to the eukaryotic ribosomal protein eL39 family.

This is Large ribosomal subunit protein eL39 from Haloquadratum walsbyi (strain DSM 16790 / HBSQ001).